Here is a 708-residue protein sequence, read N- to C-terminus: Pre-mRNA-splicing factor SPP382 (708 aa).

Residues 61–108 enclose the G-patch domain; sequence TYGIGAKLLSSMGYVAGKGLGKDGSGITTPIETQSRPMHNAGLGMFSN.

In terms of assembly, component of the NTR complex (NTC-related complex), composed of NTR1, NTR2 and PRP43. Interacts with CLF1 and NTR2. Interacts with PRP43 and PRP45.

The protein localises to the cytoplasm. The protein resides in the nucleus. Functionally, involved in pre-mRNA splicing and spliceosome disassembly. Promotes release of excised lariat intron from the spliceosome by acting as a receptor for PRP43. This targeting of PRP43 leads to disassembly of the spliceosome with the separation of the U2, U5, U6 snRNPs and the NTC complex. The sequence is that of Pre-mRNA-splicing factor SPP382 (SPP382) from Saccharomyces cerevisiae (strain ATCC 204508 / S288c) (Baker's yeast).